Reading from the N-terminus, the 688-residue chain is UvrABC system protein B (688 aa).

Residues 31–188 (GRVNAGEPDV…RKFVSMQYQR (158 aa)) form the Helicase ATP-binding domain. 44–51 (GATGTGKS) is an ATP binding site. Positions 97-120 (YYDYYQPEAYVPQTDTFIEKDSSV) match the Beta-hairpin motif. The region spanning 434–587 (QIDDLLEQIR…QVAYNTEHGI (154 aa)) is the Helicase C-terminal domain. Positions 607–632 (GEDTKKMLEGRGGGKRSPTPNLRREG) are disordered. The UVR domain occupies 642–677 (ETIISDLNDQMLQAAGELKFELAARLRDELGDLKRE).

This sequence belongs to the UvrB family. As to quaternary structure, forms a heterotetramer with UvrA during the search for lesions. Interacts with UvrC in an incision complex.

The protein resides in the cytoplasm. The UvrABC repair system catalyzes the recognition and processing of DNA lesions. A damage recognition complex composed of 2 UvrA and 2 UvrB subunits scans DNA for abnormalities. Upon binding of the UvrA(2)B(2) complex to a putative damaged site, the DNA wraps around one UvrB monomer. DNA wrap is dependent on ATP binding by UvrB and probably causes local melting of the DNA helix, facilitating insertion of UvrB beta-hairpin between the DNA strands. Then UvrB probes one DNA strand for the presence of a lesion. If a lesion is found the UvrA subunits dissociate and the UvrB-DNA preincision complex is formed. This complex is subsequently bound by UvrC and the second UvrB is released. If no lesion is found, the DNA wraps around the other UvrB subunit that will check the other stand for damage. The chain is UvrABC system protein B from Clavibacter michiganensis subsp. michiganensis (strain NCPPB 382).